The primary structure comprises 384 residues: Lipid-A-disaccharide synthase (384 aa).

This sequence belongs to the LpxB family.

The catalysed reaction is a lipid X + a UDP-2-N,3-O-bis[(3R)-3-hydroxyacyl]-alpha-D-glucosamine = a lipid A disaccharide + UDP + H(+). It functions in the pathway bacterial outer membrane biogenesis; LPS lipid A biosynthesis. Its function is as follows. Condensation of UDP-2,3-diacylglucosamine and 2,3-diacylglucosamine-1-phosphate to form lipid A disaccharide, a precursor of lipid A, a phosphorylated glycolipid that anchors the lipopolysaccharide to the outer membrane of the cell. The sequence is that of Lipid-A-disaccharide synthase from Neisseria meningitidis serogroup C / serotype 2a (strain ATCC 700532 / DSM 15464 / FAM18).